Consider the following 249-residue polypeptide: DNA repair protein RecO (249 aa).

Belongs to the RecO family.

Involved in DNA repair and RecF pathway recombination. This Rhodopseudomonas palustris (strain HaA2) protein is DNA repair protein RecO.